A 324-amino-acid polypeptide reads, in one-letter code: tRNA pseudouridine synthase B (324 aa).

The active-site Nucleophile is Asp-49.

The protein belongs to the pseudouridine synthase TruB family. Type 1 subfamily.

The enzyme catalyses uridine(55) in tRNA = pseudouridine(55) in tRNA. Responsible for synthesis of pseudouridine from uracil-55 in the psi GC loop of transfer RNAs. The polypeptide is tRNA pseudouridine synthase B (Brucella anthropi (strain ATCC 49188 / DSM 6882 / CCUG 24695 / JCM 21032 / LMG 3331 / NBRC 15819 / NCTC 12168 / Alc 37) (Ochrobactrum anthropi)).